We begin with the raw amino-acid sequence, 184 residues long: Large ribosomal subunit protein uL6 (184 aa).

The protein belongs to the universal ribosomal protein uL6 family. As to quaternary structure, part of the 50S ribosomal subunit.

Its function is as follows. This protein binds to the 23S rRNA, and is important in its secondary structure. It is located near the subunit interface in the base of the L7/L12 stalk, and near the tRNA binding site of the peptidyltransferase center. This chain is Large ribosomal subunit protein uL6, found in Thermococcus onnurineus (strain NA1).